The sequence spans 142 residues: Large ribosomal subunit protein uL11 (142 aa).

It belongs to the universal ribosomal protein uL11 family. In terms of assembly, part of the ribosomal stalk of the 50S ribosomal subunit. Interacts with L10 and the large rRNA to form the base of the stalk. L10 forms an elongated spine to which L12 dimers bind in a sequential fashion forming a multimeric L10(L12)X complex. Post-translationally, one or more lysine residues are methylated.

Functionally, forms part of the ribosomal stalk which helps the ribosome interact with GTP-bound translation factors. The polypeptide is Large ribosomal subunit protein uL11 (Methylocella silvestris (strain DSM 15510 / CIP 108128 / LMG 27833 / NCIMB 13906 / BL2)).